The chain runs to 466 residues: Chromosomal replication initiator protein DnaA (466 aa).

The domain I, interacts with DnaA modulators stretch occupies residues 1–86; it reads MSLSLWQQCL…EVGTKPVTQT (86 aa). The segment at 86–129 is domain II; that stretch reads TLKTPVHNVVAPTQTTTAQPQRVAPAARSGWDNVPAPAEPTYRS. A domain III, AAA+ region region spans residues 130–346; it reads NVNVKHTFDN…GALNRVIANA (217 aa). ATP is bound by residues G174, G176, K177, and T178. The segment at 347–466 is domain IV, binds dsDNA; it reads NFTGRAITID…FSNLIRTLSS (120 aa).

It belongs to the DnaA family. As to quaternary structure, oligomerizes as a right-handed, spiral filament on DNA at oriC.

The protein localises to the cytoplasm. Functionally, plays an essential role in the initiation and regulation of chromosomal replication. ATP-DnaA binds to the origin of replication (oriC) to initiate formation of the DNA replication initiation complex once per cell cycle. Binds the DnaA box (a 9 base pair repeat at the origin) and separates the double-stranded (ds)DNA. Forms a right-handed helical filament on oriC DNA; dsDNA binds to the exterior of the filament while single-stranded (ss)DNA is stabiized in the filament's interior. The ATP-DnaA-oriC complex binds and stabilizes one strand of the AT-rich DNA unwinding element (DUE), permitting loading of DNA polymerase. After initiation quickly degrades to an ADP-DnaA complex that is not apt for DNA replication. Binds acidic phospholipids. This Salmonella choleraesuis (strain SC-B67) protein is Chromosomal replication initiator protein DnaA.